A 378-amino-acid polypeptide reads, in one-letter code: Alpha-(1,3)-fucosyltransferase fut-5 (378 aa).

Over 1–7 (MKHNTLR) the chain is Cytoplasmic. The chain crosses the membrane as a helical; Signal-anchor for type II membrane protein span at residues 8 to 28 (AVFQFSFFIGICTFIMIAGYS). Residues 29 to 378 (YQINYNQRMG…CDNSFATRFL (350 aa)) lie on the Lumenal side of the membrane. N-linked (GlcNAc...) asparagine glycosylation is found at asparagine 44, asparagine 88, asparagine 105, asparagine 143, asparagine 171, and asparagine 307.

This sequence belongs to the glycosyltransferase 10 family. Ca(2+) serves as cofactor. In terms of processing, N-glycosylated.

The protein localises to the golgi apparatus. Its subcellular location is the golgi stack membrane. The enzyme catalyses a beta-D-galactosyl-(1-&gt;3)-N-acetyl-beta-D-glucosaminyl derivative + GDP-beta-L-fucose = a beta-D-galactosyl-(1-&gt;3)-[alpha-L-fucosyl-(1-&gt;4)]-N-acetyl-beta-D-glucosaminyl derivative + GDP + H(+). It functions in the pathway protein modification; protein glycosylation. Inhibited by Cu(2+) and Ni(2+), and to a lesser extent by EDTA, Mn(2+) and Mg(2+). Catalyzes the addition of fucose in alpha 1-3 linkage to GalNAc-beta-1-&gt;4-GlcNAc-beta-1-&gt;3-Gal-beta-1-&gt;4-Glc (LDNT)acceptor. Unlike fut-1, does not add fucose to Man-alpha-1-&gt;3-(Man-alpha-1-&gt;6)-Man-beta-1-&gt;4-GlcNAc-beta-1-&gt;4-GlcNAc-beta-1-Asn (M3), Man-alpha-1-&gt;3-(Man-alpha-1-&gt;6)-Man-beta-1-&gt;4-GlcNAc-beta-1-&gt;4-(Fuc-alpha-1-&gt;6)-GlcNAc-beta-1-Asn (M3F6) or GlcNAc-beta-1-&gt;2-Man-alpha-1-&gt;3-(GlcNAc-beta-1-&gt;2-Man-alpha-1-&gt;6)-Man-beta-1-4-GlcNAc-beta-1-&gt;4-(Fuc-alpha-1-&gt;6)-GlcNAc-beta-1-Asn (GnM3F6) acceptors. This is Alpha-(1,3)-fucosyltransferase fut-5 from Caenorhabditis elegans.